The sequence spans 212 residues: Uracil phosphoribosyltransferase (212 aa).

Residues R78, R103, and 130 to 138 (DPMLATGGS) contribute to the 5-phospho-alpha-D-ribose 1-diphosphate site. Residues I193 and 198-200 (GDA) contribute to the uracil site. D199 is a binding site for 5-phospho-alpha-D-ribose 1-diphosphate.

It belongs to the UPRTase family. Mg(2+) is required as a cofactor.

It carries out the reaction UMP + diphosphate = 5-phospho-alpha-D-ribose 1-diphosphate + uracil. The protein operates within pyrimidine metabolism; UMP biosynthesis via salvage pathway; UMP from uracil: step 1/1. Allosterically activated by GTP. Catalyzes the conversion of uracil and 5-phospho-alpha-D-ribose 1-diphosphate (PRPP) to UMP and diphosphate. The sequence is that of Uracil phosphoribosyltransferase from Stutzerimonas stutzeri (strain A1501) (Pseudomonas stutzeri).